Here is a 130-residue protein sequence, read N- to C-terminus: Small ribosomal subunit protein uS8 (130 aa).

The protein belongs to the universal ribosomal protein uS8 family. In terms of assembly, part of the 30S ribosomal subunit. Contacts proteins S5 and S12.

One of the primary rRNA binding proteins, it binds directly to 16S rRNA central domain where it helps coordinate assembly of the platform of the 30S subunit. The protein is Small ribosomal subunit protein uS8 of Phytoplasma australiense.